Here is a 339-residue protein sequence, read N- to C-terminus: Diacylglycerol acyltransferase/mycolyltransferase Ag85A (339 aa).

An N-terminal signal peptide occupies residues 1-43 (MKLVDRFRGAVTGMPRRLMVGAVGAALLSGLVGFVGGSATASA). 85 to 86 (MR) serves as a coordination point for substrate. The interval 101–111 (FEWYNQSGISV) is fibronectin-binding. A disulfide bridge connects residues Cys130 and Cys135. Residues Ser169 and Asp197 each coordinate substrate. The active-site Nucleophile is Ser169. Glu272 is an active-site residue. Residues 274-277 (FVRT), Lys281, and 304-306 (HDW) each bind substrate. His304 is a catalytic residue.

It belongs to the mycobacterial A85 antigen family. In terms of assembly, homodimer.

It localises to the secreted. The protein resides in the cell wall. The protein localises to the cytoplasm. It catalyses the reaction an acyl-CoA + a 1,2-diacyl-sn-glycerol = a triacyl-sn-glycerol + CoA. The catalysed reaction is 2 alpha,alpha'-trehalose 6-mycolate = alpha,alpha'-trehalose 6,6'-bismycolate + alpha,alpha-trehalose. Its function is as follows. The antigen 85 proteins (FbpA, FbpB, FbpC) are responsible for the high affinity of mycobacteria for fibronectin, a large adhesive glycoprotein, which facilitates the attachment of M.tuberculosis to murine alveolar macrophages (AMs). They also help to maintain the integrity of the cell wall by catalyzing the transfer of mycolic acids to cell wall arabinogalactan, and through the synthesis of alpha,alpha-trehalose dimycolate (TDM, cord factor). They catalyze the transfer of a mycoloyl residue from one molecule of alpha,alpha-trehalose monomycolate (TMM) to another TMM, leading to the formation of TDM. FbpA mediates triacylglycerol (TAG) formation with long-chain acyl-CoA as the acyl donor and 1,2-dipalmitoyl-sn-glycerol (1,2-dipalmitin) as the acyl acceptor. It has a preference for C26:0-CoA over C18:1-CoA. The chain is Diacylglycerol acyltransferase/mycolyltransferase Ag85A (fbpA) from Mycobacterium gordonae.